Consider the following 133-residue polypeptide: Putative HTH-type transcriptional regulator YwnA (133 aa).

The HTH rrf2-type domain occupies 1-130 (MINSRLAVAI…ASKSLKDVMN (130 aa)). Positions 24–47 (SEIIADSVNTNPVVVRRMISLLKK) form a DNA-binding region, H-T-H motif.

This Bacillus subtilis (strain 168) protein is Putative HTH-type transcriptional regulator YwnA (ywnA).